Reading from the N-terminus, the 160-residue chain is Phosphopantetheine adenylyltransferase (160 aa).

Ser10 contacts substrate. Residues 10 to 11 (SF) and His18 each bind ATP. 3 residues coordinate substrate: Lys42, Leu74, and Arg88. ATP is bound by residues 89-91 (GLR), Glu99, and 124-130 (YSFLSSS).

This sequence belongs to the bacterial CoaD family. Homohexamer. The cofactor is Mg(2+).

The protein resides in the cytoplasm. It catalyses the reaction (R)-4'-phosphopantetheine + ATP + H(+) = 3'-dephospho-CoA + diphosphate. Its pathway is cofactor biosynthesis; coenzyme A biosynthesis; CoA from (R)-pantothenate: step 4/5. Functionally, reversibly transfers an adenylyl group from ATP to 4'-phosphopantetheine, yielding dephospho-CoA (dPCoA) and pyrophosphate. This is Phosphopantetheine adenylyltransferase from Bacillus velezensis (strain DSM 23117 / BGSC 10A6 / LMG 26770 / FZB42) (Bacillus amyloliquefaciens subsp. plantarum).